A 130-amino-acid chain; its full sequence is Lysozyme C, kidney isozyme (130 aa).

One can recognise a C-type lysozyme domain in the interval 1-130 (KVFERCELAR…LTSYIQGCGV (130 aa)). Cystine bridges form between C6-C128, C30-C116, C65-C81, and C77-C95. Residues E35 and D53 contribute to the active site.

This sequence belongs to the glycosyl hydrolase 22 family. Monomer.

It is found in the secreted. It carries out the reaction Hydrolysis of (1-&gt;4)-beta-linkages between N-acetylmuramic acid and N-acetyl-D-glucosamine residues in a peptidoglycan and between N-acetyl-D-glucosamine residues in chitodextrins.. Its function is as follows. Lysozymes have primarily a bacteriolytic function; those in tissues and body fluids are associated with the monocyte-macrophage system and enhance the activity of immunoagents. The sequence is that of Lysozyme C, kidney isozyme from Ovis aries (Sheep).